A 116-amino-acid polypeptide reads, in one-letter code: NADH-ubiquinone oxidoreductase chain 3 (116 aa).

The next 3 helical transmembrane spans lie at 8-28, 56-76, and 88-108; these read VVATALVSLILAFIAFWLPSL, FFLIAILFLLFDLEIALLLPL, and TLLWTTTILVLLTLGLIYEWF.

Belongs to the complex I subunit 3 family.

It localises to the mitochondrion membrane. It carries out the reaction a ubiquinone + NADH + 5 H(+)(in) = a ubiquinol + NAD(+) + 4 H(+)(out). Functionally, core subunit of the mitochondrial membrane respiratory chain NADH dehydrogenase (Complex I) that is believed to belong to the minimal assembly required for catalysis. Complex I functions in the transfer of electrons from NADH to the respiratory chain. The immediate electron acceptor for the enzyme is believed to be ubiquinone. This chain is NADH-ubiquinone oxidoreductase chain 3 (MT-ND3), found in Scyliorhinus canicula (Small-spotted catshark).